Reading from the N-terminus, the 168-residue chain is Phosphopantetheine adenylyltransferase (168 aa).

Threonine 9 is a substrate binding site. Residues 9-10 (TF) and histidine 17 contribute to the ATP site. 3 residues coordinate substrate: lysine 41, leucine 73, and arginine 87. ATP is bound by residues 88 to 90 (GLR), glutamate 98, and 123 to 129 (YQFISGT).

The protein belongs to the bacterial CoaD family. As to quaternary structure, homohexamer. Mg(2+) is required as a cofactor.

The protein localises to the cytoplasm. It catalyses the reaction (R)-4'-phosphopantetheine + ATP + H(+) = 3'-dephospho-CoA + diphosphate. Its pathway is cofactor biosynthesis; coenzyme A biosynthesis; CoA from (R)-pantothenate: step 4/5. In terms of biological role, reversibly transfers an adenylyl group from ATP to 4'-phosphopantetheine, yielding dephospho-CoA (dPCoA) and pyrophosphate. This chain is Phosphopantetheine adenylyltransferase, found in Ralstonia nicotianae (strain ATCC BAA-1114 / GMI1000) (Ralstonia solanacearum).